The primary structure comprises 100 residues: ESAT-6-like protein EsxB (100 aa).

Residues 80-100 (GTQYTSTDEDQAGTLASSMNI) are disordered.

It belongs to the WXG100 family. CFP-10 subfamily. As to quaternary structure, forms a tight 1:1 complex with EsxA. An artificial EsxA-EsxB heterodimer interacts with EspA.

The protein localises to the secreted. Its function is as follows. An exported protein. Plays a role in DNA conjugation, in at least a donor strain. This Mycolicibacterium smegmatis (strain ATCC 700084 / mc(2)155) (Mycobacterium smegmatis) protein is ESAT-6-like protein EsxB.